The chain runs to 642 residues: MGKIIGIDLGTTNSCVAIMDGGKARVIENSEGDRTTPSIVAYTKDGEVLVGASAKRQAVTNPKNTFYAVKRLIGRKFTDGEVQKDISHVPYGILAHDNGDAWVQTSDSKRMAPQEISARVLEKMKKTAEDFLGEKVTEAVITVPAYFNDSQRQATKDAGRIAGLDVKRIINEPTAAALAYGLDKNGGDRKIAVYDLGGGTFDVSIIEIAEVDGEKQFEVLATNGDTFLGGEDFDNRVIEYLVDEFNKDQGIDLRKDPLALQRLKDAAERAKIELSTSQQTEVNLPYVTADASGPKHLNIKLTRAKLEALVEDLVKKSIEPCRTALNDAGLRASDINEVILVGGQTRMPKVQQAVADFFGKEPRKDVNPDEAVAVGAAIQGGVLAGDVKDVLLLDVTPLSLGIETMGGVFTKIIEKNTTIPTKASQTFSTAEDNQSAVTVHVLQGEREQARFNKSLAKFDLSGIEPAPRGMPQVEVSFDIDANGILHVSAKDKKTNKEQKVEIKAGSGLSDEEIQRMVADAEANREEDKKFQELVQTRNQADGLIHATRTAITEHGSKVGGDVIGKVEAALADLETAMKGDDKAQIEARSKTLEEAGQSLYAAAAAAEQGGNADAASGNAQASKAADDVVDAEFTEVKDDKKA.

Thr-200 is modified (phosphothreonine; by autocatalysis). Low complexity predominate over residues 603–623 (AAAAEQGGNADAASGNAQASK). The tract at residues 603–627 (AAAAEQGGNADAASGNAQASKAADD) is disordered.

The protein belongs to the heat shock protein 70 family.

Acts as a chaperone. This chain is Chaperone protein DnaK, found in Xanthomonas campestris pv. campestris (strain B100).